The sequence spans 146 residues: Acidic phospholipase A2 S5-32M (146 aa).

The first 19 residues, 1 to 19 (MYPAHLLVLLAVCVSLLGA), serve as a signal peptide directing secretion. Residues 20 to 27 (ASIPPQPL) constitute a propeptide that is removed on maturation. Cystine bridges form between C38/C98, C54/C145, C56/C72, C71/C126, C78/C119, C87/C112, and C105/C117. Positions 55, 57, and 59 each coordinate Ca(2+). H75 is an active-site residue. D76 lines the Ca(2+) pocket. D120 is an active-site residue.

The protein belongs to the phospholipase A2 family. Group I subfamily. D49 sub-subfamily. Requires Ca(2+) as cofactor. Expressed by the venom gland.

It localises to the secreted. It carries out the reaction a 1,2-diacyl-sn-glycero-3-phosphocholine + H2O = a 1-acyl-sn-glycero-3-phosphocholine + a fatty acid + H(+). Functionally, snake venom phospholipase A2 (PLA2) that inhibits collagen-induced platelet aggregation. PLA2 catalyzes the calcium-dependent hydrolysis of the 2-acyl groups in 3-sn-phosphoglycerides. The protein is Acidic phospholipase A2 S5-32M of Austrelaps superbus (Lowland copperhead snake).